The chain runs to 445 residues: tRNA(Ile)-lysidine synthase (445 aa).

ATP is bound at residue Ser30–Ser35.

It belongs to the tRNA(Ile)-lysidine synthase family.

It localises to the cytoplasm. It catalyses the reaction cytidine(34) in tRNA(Ile2) + L-lysine + ATP = lysidine(34) in tRNA(Ile2) + AMP + diphosphate + H(+). Functionally, ligates lysine onto the cytidine present at position 34 of the AUA codon-specific tRNA(Ile) that contains the anticodon CAU, in an ATP-dependent manner. Cytidine is converted to lysidine, thus changing the amino acid specificity of the tRNA from methionine to isoleucine. This is tRNA(Ile)-lysidine synthase from Alkalilimnicola ehrlichii (strain ATCC BAA-1101 / DSM 17681 / MLHE-1).